We begin with the raw amino-acid sequence, 549 residues long: Glucose-6-phosphate isomerase (549 aa).

Catalysis depends on E353, which acts as the Proton donor. Active-site residues include H384 and K510. The segment at 523-549 (AEPPAAQSDSSTDALVRRYRSERGRTA) is disordered. Over residues 537 to 549 (LVRRYRSERGRTA) the composition is skewed to basic and acidic residues.

The protein belongs to the GPI family.

The protein localises to the cytoplasm. It catalyses the reaction alpha-D-glucose 6-phosphate = beta-D-fructose 6-phosphate. Its pathway is carbohydrate biosynthesis; gluconeogenesis. The protein operates within carbohydrate degradation; glycolysis; D-glyceraldehyde 3-phosphate and glycerone phosphate from D-glucose: step 2/4. Functionally, catalyzes the reversible isomerization of glucose-6-phosphate to fructose-6-phosphate. This Mycolicibacterium gilvum (strain PYR-GCK) (Mycobacterium gilvum (strain PYR-GCK)) protein is Glucose-6-phosphate isomerase.